A 444-amino-acid polypeptide reads, in one-letter code: Phosphoribosylamine--glycine ligase (444 aa).

Residues 109 to 324 enclose the ATP-grasp domain; it reads RNLFKKYNIK…FLEVCEAIVN (216 aa). 140-202 contacts ATP; that stretch reads LTEKGIKAVV…EEKLEGVEFT (63 aa). Mg(2+)-binding residues include Gln-282, Glu-294, and Asn-296. The Mn(2+) site is built by Gln-282, Glu-294, and Asn-296.

This sequence belongs to the GARS family. The cofactor is Mg(2+). Mn(2+) serves as cofactor.

It carries out the reaction 5-phospho-beta-D-ribosylamine + glycine + ATP = N(1)-(5-phospho-beta-D-ribosyl)glycinamide + ADP + phosphate + H(+). The protein operates within purine metabolism; IMP biosynthesis via de novo pathway; N(1)-(5-phospho-D-ribosyl)glycinamide from 5-phospho-alpha-D-ribose 1-diphosphate: step 2/2. The polypeptide is Phosphoribosylamine--glycine ligase (Methanocaldococcus jannaschii (strain ATCC 43067 / DSM 2661 / JAL-1 / JCM 10045 / NBRC 100440) (Methanococcus jannaschii)).